We begin with the raw amino-acid sequence, 421 residues long: MKFAIESVSKCSGRLGTLNVKNAFSNVSISTPALVLHAKGGSIPFLSREVLQYLTAETPIMQHSLTNTDHMEEAVRACDEGISSFVGHKESISLLVLKDPAEQCKPSFHEKDFVPIFSRSGRKNFTSERYMQLVEAFKPTVFVPLFDGDTDLESSKKRLQKSLDRTEKFVEQCVEAHRKSANLKESNLIGPVVGGYNLKLRSASVKFLEQFKNDLEGYMIAGLHSNGLSATELKESNLVEVVSHTCQSLPTDKVRFMFGAFSPRIILKLVAQGIDVFDTSFAYLKTQQNRALTFSFDVNDKNVDSRETELDIRDPRWAEEFTGFVESCSCLACTKHTKAYAHHLYNTREMLAPIILMMHNLHHYFEFFKAIRKHVSEDTLDQLVEHLQKQKDVPLFDEKSVDVTKADPMDFRDSATKKLKV.

Residues Cys328, Cys330, Cys333, and His359 each coordinate Zn(2+).

Belongs to the queuine tRNA-ribosyltransferase family. QTRT2 subfamily. In terms of assembly, heterodimer of a catalytic subunit and an accessory subunit. Zn(2+) serves as cofactor.

Its subcellular location is the cytoplasm. Functionally, non-catalytic subunit of the queuine tRNA-ribosyltransferase (TGT) that catalyzes the base-exchange of a guanine (G) residue with queuine (Q) at position 34 (anticodon wobble position) in tRNAs with GU(N) anticodons (tRNA-Asp, -Asn, -His and -Tyr), resulting in the hypermodified nucleoside queuosine (7-(((4,5-cis-dihydroxy-2-cyclopenten-1-yl)amino)methyl)-7-deazaguanosine). This is Queuine tRNA-ribosyltransferase accessory subunit 2 from Aedes aegypti (Yellowfever mosquito).